A 259-amino-acid polypeptide reads, in one-letter code: Phosphate import ATP-binding protein PstB (259 aa).

The ABC transporter domain maps to 11-254; sequence AEARNLNFYY…PQDKRTEDYI (244 aa). Residue 43 to 50 participates in ATP binding; the sequence is GPSGCGKS.

The protein belongs to the ABC transporter superfamily. Phosphate importer (TC 3.A.1.7) family. As to quaternary structure, the complex is composed of two ATP-binding proteins (PstB), two transmembrane proteins (PstC and PstA) and a solute-binding protein (PstS).

It localises to the cell inner membrane. It catalyses the reaction phosphate(out) + ATP + H2O = ADP + 2 phosphate(in) + H(+). Functionally, part of the ABC transporter complex PstSACB involved in phosphate import. Responsible for energy coupling to the transport system. This Dechloromonas aromatica (strain RCB) protein is Phosphate import ATP-binding protein PstB.